We begin with the raw amino-acid sequence, 268 residues long: MSDWQMAEAWTLEEAIANIQQTEDTGKRYYAAWWFGKFRVQDERAVNALLAALKDETDRSPDGGYPLRRNAAKALGKLGNLAAVQPLIESLESPDYYVRESAAQSLEMLGDRQAIPALQALLAGGVAAAVKAEGKPHLVQPYEAVIEALGTIGATAAIAEIEPFLDHEFAKIRYAALRALYQLTQEAHYAEQLMEALNGNQLQLRRSALLDLGAIGYVPAGQAIAKAYAENSLKLISLKGILESHLQRTAETLDADGLQLLELMDSLL.

The protein belongs to the CpcE/RpcE/PecE family. CpcE and CpcF associate to form a lyase.

Its function is as follows. Required for the chromophorylation of the cpcA gene product. The polypeptide is Phycocyanobilin lyase subunit alpha (cpcE) (Picosynechococcus sp. (strain ATCC 27264 / PCC 7002 / PR-6) (Agmenellum quadruplicatum)).